The primary structure comprises 310 residues: Alpha/beta hydrolase domain-containing protein 17A (310 aa).

The tract at residues 38–61 (VPEPEPGPGGAGAAPSGPLRTSAA) is disordered. Active-site charge relay system residues include Ser-190, Asp-255, and His-284. Position 307 is a phosphoserine (Ser-307).

This sequence belongs to the AB hydrolase superfamily. ABHD17 family. In terms of processing, palmitoylated on cysteine residues located in a cysteine cluster at the N-terminus which promotes membrane localization. Palmitoylation is required for post-synaptic localization and for depalmitoylating activity towards DLG4/PSD95. As to expression, expressed in brain (at protein level). Expressed in hippocampal neurons.

It is found in the cell membrane. It localises to the recycling endosome membrane. Its subcellular location is the cell projection. The protein resides in the dendritic spine. The protein localises to the postsynaptic density membrane. The enzyme catalyses S-hexadecanoyl-L-cysteinyl-[protein] + H2O = L-cysteinyl-[protein] + hexadecanoate + H(+). Functionally, hydrolyzes fatty acids from S-acylated cysteine residues in proteins. Has depalmitoylating activity towards NRAS. Has depalmitoylating activity towards DLG4/PSD95. May have depalmitoylating activity towards MAP6. The protein is Alpha/beta hydrolase domain-containing protein 17A of Rattus norvegicus (Rat).